Consider the following 581-residue polypeptide: Bestrophin-1 (581 aa).

Over 1–31 the chain is Cytoplasmic; the sequence is MTVTYSSQVANARLGSFSRLLLCWRGSIYKL. Alanine 10 serves as a coordination point for Ca(2+). A helical transmembrane segment spans residues 32 to 51; sequence LYGEFLIFLLCYYIIRFIYR. Residues 52–60 are Extracellular-facing; it reads MALTDEQQV. The chain crosses the membrane as a helical span at residues 61–82; the sequence is IFEKLTLYCDSYIQLIPISFVL. Residues 83-237 lie on the Cytoplasmic side of the membrane; that stretch reads GFYVTLVVTR…DWISVPLVYT (155 aa). A helical transmembrane segment spans residues 238–255; it reads QVVTVAVYSFFLACLVGR. The Extracellular segment spans residues 256–274; that stretch reads QFLNPAKAYPGHEMDLVVP. A helical transmembrane segment spans residues 275-288; the sequence is LFTFLQFFFYAGWL. Residues 289-581 are Cytoplasmic-facing; it reads KVAEQLINPF…ALENRDEAHS (293 aa). Residues glutamine 293, asparagine 296, aspartate 301, and aspartate 304 each coordinate Ca(2+). A disordered region spans residues 416 to 440; the sequence is EGHFHEGHPKNLRGARLDSSDQEDS.

The protein belongs to the anion channel-forming bestrophin (TC 1.A.46) family. Calcium-sensitive chloride channel subfamily. Interacts with YWHAG; this interaction promotes the ligand-gated L-glutamate channel activity leading to the positive regulation of NMDA glutamate receptor activity through the L-glutamate secretion. Phosphorylated (in vitro). Post-translationally, dephosphorylated (in vitro) by PP2A.

The protein localises to the cell membrane. The protein resides in the basolateral cell membrane. The catalysed reaction is chloride(in) = chloride(out). It catalyses the reaction hydrogencarbonate(in) = hydrogencarbonate(out). The enzyme catalyses 4-aminobutanoate(in) = 4-aminobutanoate(out). It carries out the reaction L-glutamate(out) = L-glutamate(in). Functionally, ligand-gated anion channel that allows the movement of anions across cell membranes when activated by calcium (Ca2+). Allows the movement of chloride and hydrogencarbonate. Found in a partially open conformation leading to significantly smaller chloride movement. Upon F2R/PAR-1 activation, the sequestered calcium is released into the cytosol of astrocytes, leading to the (Ca2+)-dependent release of L-glutamate into the synaptic cleft that targets the neuronal postsynaptic GRIN2A/NMDAR receptor resulting in the synaptic plasticity regulation. Upon activation of the norepinephrine-alpha-1 adrenergic receptor signaling pathway, transports as well D-serine than L-glutamate in a (Ca2+)-dependent manner, leading to activation of adjacent NMDAR receptors and therefore regulates the heterosynaptic long-term depression and metaplasticity during initial memory acquisition. Releases the 4-aminobutanoate neurotransmitter in a (Ca2+)-dependent manner, and participates in its tonic release from cerebellar glial cells. This is Bestrophin-1 from Sus scrofa (Pig).